The sequence spans 598 residues: Probable ATP-dependent RNA helicase DDX52 (598 aa).

N6-acetyllysine is present on Lys15. Ser39 carries the post-translational modification Phosphoserine. The interval 59 to 98 (CGGLQTQQELQNEETTEGGLLERSKEPKKKKRKKMTADVP) is disordered. The Q motif signature appears at 166–194 (QLDQEYKISPRLLQNILDAGFQVPTPIQM). A Helicase ATP-binding domain is found at 197–375 (IPVMLHGREL…KLNLDNIVSV (179 aa)). 210-217 (APTGSGKT) lines the ATP pocket. Positions 319–322 (DESD) match the DEAD box motif. The 162-residue stretch at 386–547 (TVEQELLFVG…PVPEYIKGFQ (162 aa)) folds into the Helicase C-terminal domain. The segment at 578 to 598 (AKQKKVAGQNSKKKETLKGKS) is disordered. Residues 589 to 598 (KKKETLKGKS) are compositionally biased toward basic and acidic residues.

Belongs to the DEAD box helicase family. DDX52/ROK1 subfamily.

Its subcellular location is the nucleus. It localises to the nucleolus. It catalyses the reaction ATP + H2O = ADP + phosphate + H(+). In terms of biological role, required for efficient ribosome biogenesis. May control cell cycle progression by regulating translation of mRNAs that contain a terminal oligo pyrimidine (TOP) motif in their 5' UTRs, such as GTPBP4. The protein is Probable ATP-dependent RNA helicase DDX52 (Ddx52) of Rattus norvegicus (Rat).